The sequence spans 301 residues: Cytosolic sulfotransferase 3 (301 aa).

Position 53 to 58 (53 to 58) interacts with 3'-phosphoadenylyl sulfate; sequence KAGTTW. Residue histidine 115 is the Proton acceptor of the active site. 3'-phosphoadenylyl sulfate is bound by residues arginine 137, serine 145, tyrosine 201, 235–240, and 263–265; these read VQFDAM and RKG.

The protein belongs to the sulfotransferase 1 family.

Its subcellular location is the cytoplasm. Its activity is regulated as follows. Inhibited by Hg(2+), Co(2+), Zn(2+), Cd(2+), Cu(2+) and Pb(2+) ions. Activated slightly by Mn(2+), Ca(2+) and Mg(2+) ions. In terms of biological role, sulfotransferase that utilizes 3'-phospho-5'-adenylyl sulfate (PAPS) as sulfonate donor to catalyze the sulfate conjugation of a variety of xenobiotic and endogenous compounds, including dopamine, T3 (triiodo-L-thyronine), T4 (thyroxine), estrone, DHEA (dehydroepiandrosterone), flavonoids, isoflavonoids and other phenolic compounds. This is Cytosolic sulfotransferase 3 from Danio rerio (Zebrafish).